Reading from the N-terminus, the 202-residue chain is Regulator of G-protein signaling 16 (202 aa).

S-palmitoyl cysteine attachment occurs at residues cysteine 2 and cysteine 12. In terms of domain architecture, RGS spans 65–181 (SFDLLLSSKN…LKSPAYRDLA (117 aa)). Tyrosine 168 carries the post-translational modification Phosphotyrosine; by EGFR. At tyrosine 177 the chain carries Phosphotyrosine.

As to quaternary structure, interacts with GNAI1 and GNAQ. Interacts with GNAI2, GNAI3 and GNAO1. Post-translationally, palmitoylated on Cys-2 and/or Cys-12. In terms of processing, phosphorylated. Phosphorylation at Tyr-168 by EGFR enhances GTPase accelerating (GAP) activity toward GNAI1. As to expression, abundantly expressed in retina with lower levels of expression in most other tissues.

The protein localises to the membrane. Its function is as follows. Regulates G protein-coupled receptor signaling cascades. Inhibits signal transduction by increasing the GTPase activity of G protein alpha subunits, thereby driving them into their inactive GDP-bound form. Plays an important role in the phototransduction cascade by regulating the lifetime and effective concentration of activated transducin alpha. May regulate extra and intracellular mitogenic signals. In Homo sapiens (Human), this protein is Regulator of G-protein signaling 16 (RGS16).